The chain runs to 24 residues: Flavin reductase (NADPH) (24 aa).

NADP(+) is bound by residues glycine 9, threonine 11, glycine 12, and threonine 14.

It belongs to the BLVRB family. Monomer. In terms of tissue distribution, detected in erythrocytes (at protein level).

The protein resides in the cytoplasm. It carries out the reaction reduced riboflavin + NADP(+) = riboflavin + NADPH + 2 H(+). It catalyses the reaction bilirubin IXbeta + NADP(+) = biliverdin IXbeta + NADPH + H(+). The catalysed reaction is FMNH2 + NAD(+) = FMN + NADH + 2 H(+). The enzyme catalyses FMNH2 + NADP(+) = FMN + NADPH + 2 H(+). It carries out the reaction S-nitroso-CoA + L-cysteinyl-[protein] = S-nitroso-L-cysteinyl-[protein] + CoA. It catalyses the reaction L-cysteinyl-[SCAN] + S-nitroso-CoA = S-nitroso-L-cysteinyl-[SCAN] + CoA. The catalysed reaction is S-nitroso-L-cysteinyl-[SCAN] + L-cysteinyl-[protein] = L-cysteinyl-[SCAN] + S-nitroso-L-cysteinyl-[protein]. Its function is as follows. Enzyme that can both act as a NAD(P)H-dependent reductase and a S-nitroso-CoA-dependent nitrosyltransferase. Promotes fetal heme degradation during development. Also expressed in adult tissues, where it acts as a regulator of hematopoiesis, intermediary metabolism (glutaminolysis, glycolysis, TCA cycle and pentose phosphate pathway) and insulin signaling. Has a broad specificity oxidoreductase activity by catalyzing the NAD(P)H-dependent reduction of a variety of flavins, such as riboflavin, FAD or FMN, biliverdins, methemoglobin and PQQ (pyrroloquinoline quinone). Contributes to fetal heme catabolism by catalyzing reduction of biliverdin IXbeta into bilirubin IXbeta in the liver. Biliverdin IXbeta, which constitutes the major heme catabolite in the fetus is not present in adult. Does not reduce bilirubin IXalpha. Can also reduce the complexed Fe(3+) iron to Fe(2+) in the presence of FMN and NADPH. Acts as a protein nitrosyltransferase by catalyzing nitrosylation of cysteine residues of target proteins, such as HMOX2, INSR and IRS1. S-nitroso-CoA-dependent nitrosyltransferase activity is mediated via a 'ping-pong' mechanism: BLVRB first associates with both S-nitroso-CoA and protein substrate, nitric oxide group is then transferred from S-nitroso-CoA to Cys residues of BLVRB and from S-nitroso-BLVRB to the protein substrate. Inhibits insulin signaling by mediating nitrosylation of INSR and IRS1, leading to their inhibition. The polypeptide is Flavin reductase (NADPH) (BLVRB) (Aquarana catesbeiana (American bullfrog)).